The following is a 313-amino-acid chain: MTDLDSSLPPSVRTAGDSWTITELVGATALGVAAARAAETAGPDPLIRDEFAGLLVSSASPAWARLADPELSWLDDDPHGKRAHRVGIDYQAVRTHYFDEYFDGALRAGIRQVVILAAGLDSRAYRLNWPAGTTVYEIDQPKVLEYKTETLQRHGATPAAVRRPVPVDLRDDWPAALTAAGFQAARPTAWLAEGLLPYLPSDAQDRLFEMVTALSAAGSQVAVEVFGMNSRSNAQRWLRMRERLGLDVNVAALTYHEPDRSDAAAWLARHGWRVHSVDNRDEMARLGRPVPEDLSDEAVRSTLLRAHLGGSTG.

Residues aspartate 139 and 168-169 (DL) each bind S-adenosyl-L-methionine.

This sequence belongs to the UPF0677 family.

In terms of biological role, exhibits S-adenosyl-L-methionine-dependent methyltransferase activity. This is Putative S-adenosyl-L-methionine-dependent methyltransferase MAP_3563 from Mycolicibacterium paratuberculosis (strain ATCC BAA-968 / K-10) (Mycobacterium paratuberculosis).